The chain runs to 156 residues: H/ACA ribonucleoprotein complex subunit NHP2 (156 aa).

The protein belongs to the eukaryotic ribosomal protein eL8 family. As to quaternary structure, component of the small nucleolar ribonucleoprotein particles containing H/ACA-type snoRNAs (H/ACA snoRNPs). The protein component of the H/ACA snoRNP contains CBF5, GAR1, NHP2 and NOP10. The complex contains a stable core composed of CBF5 and NOP10, to which GAR1 and NHP2 subsequently bind. Interacts with SHQ1. Interacts with NAF1.

It is found in the nucleus. The protein localises to the nucleolus. Non-catalytic component of the H/ACA small nucleolar ribonucleoprotein (H/ACA snoRNP), which catalyzes pseudouridylation of rRNA and is required for ribosome biogenesis. This involves the isomerization of uridine such that the ribose is subsequently attached to C5, instead of the normal N1. Pseudouridine ('psi') residues may serve to stabilize the conformation of rRNAs. The H/ACA snoRNP complex also mediates pseudouridylation of other types of RNAs. The H/ACA snoRNP complex mediates pseudouridylation at position 93 in U2 snRNA. Essential for growth. Directly binds H/ACA snoRNAs. The polypeptide is H/ACA ribonucleoprotein complex subunit NHP2 (NHP2) (Saccharomyces cerevisiae (strain ATCC 204508 / S288c) (Baker's yeast)).